Reading from the N-terminus, the 353-residue chain is MKLEKLRNLFGQLGIDGMLITSNTNVRYMTGFTGSAGLAVISGDKAAFITDFRYTEQAKVQVKGFEIIEHGGSLIQTTADTVESFGIKRLGFEQNSMTYGTYASYSAVISDAELVPVAESVEKLRLIKSSEEIKILEEAAKIADDAFRHILTFMKPGISEIAVANELEFYMRSQGADSSSFDMIVASGLRSSLPHGVASDKLIESGDLVTLDFGAYYKGYCSDITRTVAVGQPSDQLKEIYQVVFDAQALGVAHIKPGMTGKEADALTRDHIAAKGYGDYFGHSTGHGLGMEVHESPGLSVRSSAILEPGMVVTVEPGIYIPETGGVRIEDDIVITENGNRTITHSPKELIIL.

Mn(2+) contacts are provided by D212, D223, H287, E316, and E330.

This sequence belongs to the peptidase M24B family. Requires Mn(2+) as cofactor.

This is an uncharacterized protein from Bacillus subtilis (strain 168).